The chain runs to 197 residues: Peptide deformylase (197 aa).

Positions 106 and 148 each coordinate Fe cation. The active site involves Glu149. His152 is a Fe cation binding site.

It belongs to the polypeptide deformylase family. The cofactor is Fe(2+).

The catalysed reaction is N-terminal N-formyl-L-methionyl-[peptide] + H2O = N-terminal L-methionyl-[peptide] + formate. Its function is as follows. Removes the formyl group from the N-terminal Met of newly synthesized proteins. Requires at least a dipeptide for an efficient rate of reaction. N-terminal L-methionine is a prerequisite for activity but the enzyme has broad specificity at other positions. In Mycobacterium sp. (strain JLS), this protein is Peptide deformylase.